A 179-amino-acid polypeptide reads, in one-letter code: Large ribosomal subunit protein uL6 (179 aa).

It belongs to the universal ribosomal protein uL6 family. As to quaternary structure, part of the 50S ribosomal subunit.

This protein binds to the 23S rRNA, and is important in its secondary structure. It is located near the subunit interface in the base of the L7/L12 stalk, and near the tRNA binding site of the peptidyltransferase center. This Rippkaea orientalis (strain PCC 8801 / RF-1) (Cyanothece sp. (strain PCC 8801)) protein is Large ribosomal subunit protein uL6.